The chain runs to 149 residues: D-aminoacyl-tRNA deacylase (149 aa).

A Gly-cisPro motif, important for rejection of L-amino acids motif is present at residues 137–138 (GP).

The protein belongs to the DTD family. In terms of assembly, homodimer.

The protein localises to the cytoplasm. It carries out the reaction glycyl-tRNA(Ala) + H2O = tRNA(Ala) + glycine + H(+). It catalyses the reaction a D-aminoacyl-tRNA + H2O = a tRNA + a D-alpha-amino acid + H(+). In terms of biological role, an aminoacyl-tRNA editing enzyme that deacylates mischarged D-aminoacyl-tRNAs. Also deacylates mischarged glycyl-tRNA(Ala), protecting cells against glycine mischarging by AlaRS. Acts via tRNA-based rather than protein-based catalysis; rejects L-amino acids rather than detecting D-amino acids in the active site. By recycling D-aminoacyl-tRNA to D-amino acids and free tRNA molecules, this enzyme counteracts the toxicity associated with the formation of D-aminoacyl-tRNA entities in vivo and helps enforce protein L-homochirality. The chain is D-aminoacyl-tRNA deacylase from Koribacter versatilis (strain Ellin345).